A 667-amino-acid polypeptide reads, in one-letter code: Autophagy-related protein 20 (667 aa).

The interval 1 to 94 (MKQKKNRFGS…DESFKSTRAN (94 aa)) is disordered. The segment covering 38 to 47 (SSSSRSSSTQ) has biased composition (low complexity). Over residues 55-67 (SLASVHTSDMHQS) the composition is skewed to polar residues. A compositionally biased stretch (acidic residues) spans 76 to 85 (DDNPFLDQDD). The region spanning 185 to 331 (KLINDRVQIL…DFLDPNNINW (147 aa)) is the PX domain. A 1,2-diacyl-sn-glycero-3-phospho-(1D-myo-inositol-3-phosphate) is bound by residues Arg222, Ser224, Lys248, and Arg297. The interval 524 to 562 (ELQRGVQPRNGNTASGASGNDESSVKKPQASKSQSSSYG) is disordered. The span at 532–545 (RNGNTASGASGNDE) shows a compositional bias: polar residues. Residues 549–560 (KKPQASKSQSSS) show a composition bias toward low complexity. The stretch at 588-652 (QTTMANLIKE…SKYLKDYAKK (65 aa)) forms a coiled coil.

The protein belongs to the sorting nexin family.

The protein localises to the endosome membrane. The protein resides in the preautophagosomal structure membrane. Its function is as follows. Required for cytoplasm to vacuole transport (Cvt), pexophagy and mitophagy. Also involved in endoplasmic reticulum-specific autophagic process and is essential for the survival of cells subjected to severe ER stress. Functions in protein retrieval from the endocytic pathway. This Vanderwaltozyma polyspora (strain ATCC 22028 / DSM 70294 / BCRC 21397 / CBS 2163 / NBRC 10782 / NRRL Y-8283 / UCD 57-17) (Kluyveromyces polysporus) protein is Autophagy-related protein 20 (ATG20).